The following is a 467-amino-acid chain: Ribulose bisphosphate carboxylase large chain (467 aa).

Lys5 is modified (N6,N6,N6-trimethyllysine). Residues Asn114 and Thr164 each coordinate substrate. Lys166 functions as the Proton acceptor in the catalytic mechanism. A substrate-binding site is contributed by Lys168. Lys192, Asp194, and Glu195 together coordinate Mg(2+). Lys192 is subject to N6-carboxylysine. The active-site Proton acceptor is His285. Arg286, His318, and Ser370 together coordinate substrate.

The protein belongs to the RuBisCO large chain family. Type I subfamily. In terms of assembly, heterohexadecamer of 8 large chains and 8 small chains; disulfide-linked. The disulfide link is formed within the large subunit homodimers. The cofactor is Mg(2+). The disulfide bond which can form in the large chain dimeric partners within the hexadecamer appears to be associated with oxidative stress and protein turnover.

The protein localises to the plastid. It is found in the chloroplast. The catalysed reaction is 2 (2R)-3-phosphoglycerate + 2 H(+) = D-ribulose 1,5-bisphosphate + CO2 + H2O. The enzyme catalyses D-ribulose 1,5-bisphosphate + O2 = 2-phosphoglycolate + (2R)-3-phosphoglycerate + 2 H(+). RuBisCO catalyzes two reactions: the carboxylation of D-ribulose 1,5-bisphosphate, the primary event in carbon dioxide fixation, as well as the oxidative fragmentation of the pentose substrate in the photorespiration process. Both reactions occur simultaneously and in competition at the same active site. The polypeptide is Ribulose bisphosphate carboxylase large chain (Eriodictyon californicum (California yerba santa)).